The chain runs to 486 residues: Glutamyl-tRNA(Gln) amidotransferase subunit A (486 aa).

Catalysis depends on charge relay system residues Lys80 and Ser155. Ser179 (acyl-ester intermediate) is an active-site residue.

It belongs to the amidase family. GatA subfamily. Heterotrimer of A, B and C subunits.

The catalysed reaction is L-glutamyl-tRNA(Gln) + L-glutamine + ATP + H2O = L-glutaminyl-tRNA(Gln) + L-glutamate + ADP + phosphate + H(+). Allows the formation of correctly charged Gln-tRNA(Gln) through the transamidation of misacylated Glu-tRNA(Gln) in organisms which lack glutaminyl-tRNA synthetase. The reaction takes place in the presence of glutamine and ATP through an activated gamma-phospho-Glu-tRNA(Gln). The sequence is that of Glutamyl-tRNA(Gln) amidotransferase subunit A from Geobacillus sp. (strain WCH70).